The sequence spans 479 residues: Ribosomal RNA small subunit methyltransferase F (479 aa).

S-adenosyl-L-methionine is bound by residues 125–131 (AAAPGSK), Glu-149, Asp-176, and Asp-194. The active-site Nucleophile is the Cys-247.

The protein belongs to the class I-like SAM-binding methyltransferase superfamily. RsmB/NOP family.

Its subcellular location is the cytoplasm. It carries out the reaction cytidine(1407) in 16S rRNA + S-adenosyl-L-methionine = 5-methylcytidine(1407) in 16S rRNA + S-adenosyl-L-homocysteine + H(+). In terms of biological role, specifically methylates the cytosine at position 1407 (m5C1407) of 16S rRNA. The protein is Ribosomal RNA small subunit methyltransferase F of Escherichia coli O17:K52:H18 (strain UMN026 / ExPEC).